Here is a 227-residue protein sequence, read N- to C-terminus: Ion-translocating oxidoreductase complex subunit E (227 aa).

A run of 5 helical transmembrane segments spans residues Ala34–Ser56, Ile68–Ala88, Phe91–Val111, Phe127–Ile147, and Thr181–Ile201.

It belongs to the NqrDE/RnfAE family. As to quaternary structure, the complex is composed of six subunits: RnfA, RnfB, RnfC, RnfD, RnfE and RnfG.

Its subcellular location is the cell inner membrane. In terms of biological role, part of a membrane-bound complex that couples electron transfer with translocation of ions across the membrane. The sequence is that of Ion-translocating oxidoreductase complex subunit E from Buchnera aphidicola subsp. Acyrthosiphon pisum (strain 5A).